Consider the following 74-residue polypeptide: Translation initiation factor IF-1 2 (74 aa).

The region spanning 1–73 (MTKNKNVIEV…TRGRIVFRYR (73 aa)) is the S1-like domain.

Belongs to the IF-1 family. As to quaternary structure, component of the 30S ribosomal translation pre-initiation complex which assembles on the 30S ribosome in the order IF-2 and IF-3, IF-1 and N-formylmethionyl-tRNA(fMet); mRNA recruitment can occur at any time during PIC assembly.

Its subcellular location is the cytoplasm. Its function is as follows. One of the essential components for the initiation of protein synthesis. Stabilizes the binding of IF-2 and IF-3 on the 30S subunit to which N-formylmethionyl-tRNA(fMet) subsequently binds. Helps modulate mRNA selection, yielding the 30S pre-initiation complex (PIC). Upon addition of the 50S ribosomal subunit IF-1, IF-2 and IF-3 are released leaving the mature 70S translation initiation complex. The chain is Translation initiation factor IF-1 2 from Streptomyces avermitilis (strain ATCC 31267 / DSM 46492 / JCM 5070 / NBRC 14893 / NCIMB 12804 / NRRL 8165 / MA-4680).